The following is a 76-amino-acid chain: Accessory gland-specific peptide 57Dc (76 aa).

The first 20 residues, 1-20 (MHGTHFLILLLLCGVLGSNG), serve as a signal peptide directing secretion.

CAMP-dependent phosphorylation. In terms of tissue distribution, lumen fluid of male accessory glands, becomes seminal fluid.

It localises to the secreted. Functionally, transferred from male to female during mating and may affect egglaying and behavior after mating. The polypeptide is Accessory gland-specific peptide 57Dc (Mst57Dc) (Drosophila melanogaster (Fruit fly)).